Here is a 460-residue protein sequence, read N- to C-terminus: NADH-ubiquinone oxidoreductase chain 4 (460 aa).

13 consecutive transmembrane segments (helical) span residues Ser-20 to Leu-42, Pro-61 to Ser-81, Arg-94 to Ala-113, Thr-114 to Ile-134, Thr-148 to Leu-168, Ile-195 to Leu-215, Pro-225 to Met-245, Leu-258 to Leu-278, Ser-285 to Ile-304, Trp-308 to Leu-330, Met-351 to Pro-371, Leu-380 to Gly-400, and Leu-436 to Trp-456.

Belongs to the complex I subunit 4 family. Core subunit of respiratory chain NADH dehydrogenase (Complex I) which is composed of 45 different subunits.

The protein resides in the mitochondrion inner membrane. The catalysed reaction is a ubiquinone + NADH + 5 H(+)(in) = a ubiquinol + NAD(+) + 4 H(+)(out). Core subunit of the mitochondrial membrane respiratory chain NADH dehydrogenase (Complex I) which catalyzes electron transfer from NADH through the respiratory chain, using ubiquinone as an electron acceptor. Essential for the catalytic activity and assembly of complex I. The sequence is that of NADH-ubiquinone oxidoreductase chain 4 (mt-nd4) from Danio rerio (Zebrafish).